Consider the following 504-residue polypeptide: 2,3-bisphosphoglycerate-independent phosphoglycerate mutase (504 aa).

Positions 13 and 63 each coordinate Mn(2+). S63 acts as the Phosphoserine intermediate in catalysis. Substrate is bound by residues H124, 153–154 (RD), R183, R189, 254–257 (RADR), and K330. D397, H401, D438, H439, and H457 together coordinate Mn(2+).

The protein belongs to the BPG-independent phosphoglycerate mutase family. As to quaternary structure, monomer. The cofactor is Mn(2+).

It catalyses the reaction (2R)-2-phosphoglycerate = (2R)-3-phosphoglycerate. The protein operates within carbohydrate degradation; glycolysis; pyruvate from D-glyceraldehyde 3-phosphate: step 3/5. Catalyzes the interconversion of 2-phosphoglycerate and 3-phosphoglycerate. The sequence is that of 2,3-bisphosphoglycerate-independent phosphoglycerate mutase from Rhodopseudomonas palustris (strain ATCC BAA-98 / CGA009).